The sequence spans 1010 residues: Lysosomal alpha-mannosidase (1010 aa).

Positions Met-1–Gly-22 are cleaved as a signal peptide. A propeptide spans Lys-23 to Thr-40 (pro I). The Zn(2+) site is built by His-51 and Asp-53. Asn-68 carries an N-linked (GlcNAc...) asparagine glycan. Residues Asp-173 and His-420 each contribute to the Zn(2+) site. Asp-173 serves as the catalytic Nucleophile. Residues Asn-480, Asn-520, Asn-528, Asn-539, Asn-623, Asn-760, Asn-784, Asn-828, Asn-954, and Asn-963 are each glycosylated (N-linked (GlcNAc...) asparagine). Positions Arg-508–Ser-595 are cleaved as a propeptide — pro II.

It belongs to the glycosyl hydrolase 38 family. As to quaternary structure, tetramer of equimolar amounts of 60 and 58 kDa subunits. Requires Zn(2+) as cofactor. In terms of processing, first cleaved into the mature 58 kDa subunit and an intermediate 82 kDa subunit. The latter is then cleaved to its mature 60 kDa subunit form. These events occur in multiple intracellular compartments. The 60 kDa subunit may form one or more intramolecular disulfide bonds.

The protein resides in the lysosome. It carries out the reaction Hydrolysis of terminal, non-reducing alpha-D-mannose residues in alpha-D-mannosides.. This Dictyostelium discoideum (Social amoeba) protein is Lysosomal alpha-mannosidase (manA).